A 443-amino-acid chain; its full sequence is Probable serine transporter (443 aa).

At 1–48 the chain is on the cytoplasmic side; sequence MEIASNKGVIADASTPAGRAGMSESEWREAIKFDSTDTGWVIMSIGMA. The chain crosses the membrane as a helical span at residues 49 to 69; it reads IGAGIVFLPVQVGLMGLWVFL. Residues 70–110 are Periplasmic-facing; the sequence is LSSVIGYPAMYLFQRLFINTLAESPECKDYPSVISGYLGKN. The helical transmembrane segment at 111-131 threads the bilayer; sequence WGILLGALYFVMLVIWMFVYS. At 132 to 149 the chain is on the cytoplasmic side; the sequence is TAITNDSASYLHTFGVTE. The chain crosses the membrane as a helical span at residues 150–170; it reads GLLSDSPFYGLVLICILVAIS. At 171–182 the chain is on the periplasmic side; the sequence is SRGEKLLFKIST. Residues 183 to 203 traverse the membrane as a helical segment; the sequence is GMVLTKLLVVAALGVSMVGMW. At 204 to 214 the chain is on the cytoplasmic side; sequence HLYNVGSLPPL. A helical transmembrane segment spans residues 215–235; it reads GLLVKNAIITLPFTLTSILFI. Topologically, residues 236–264 are periplasmic; that stretch reads QTLSPMVISYRSREKSIEVARHKALRAMN. A helical transmembrane segment spans residues 265 to 285; that stretch reads IAFGILFVTVFFYAVSFTLAM. Topologically, residues 286 to 297 are cytoplasmic; the sequence is GHDEAVKAYEQN. Helical transmembrane passes span 298–318 and 319–339; these read ISALAIAAQFISGDGAAWVKV and VSVILNIFAVMTAFFGVYLGF. Residues 340–367 are Cytoplasmic-facing; sequence REATQGIVMNILRRKMPAEKINENLVQR. The chain crosses the membrane as a helical span at residues 368–388; it reads GIMIFAILLAWSAIVLNAPVL. Position 389 (serine 389) is a topological domain, periplasmic. A helical membrane pass occupies residues 390–410; it reads FTSICSPIFGMVGCLIPAWLV. Topologically, residues 411–421 are cytoplasmic; that stretch reads YKVPALHKYKG. A helical membrane pass occupies residues 422–442; that stretch reads MSLYLIIVTGLLLCVSPFLAF. Position 443 (serine 443) is a topological domain, periplasmic.

Belongs to the amino acid/polyamine transporter 2 family. SdaC/TdcC subfamily.

Its subcellular location is the cell inner membrane. In terms of biological role, plays a role in L-cysteine detoxification. May transport both D- and L-serine. The polypeptide is Probable serine transporter (dlsT) (Escherichia coli (strain K12)).